We begin with the raw amino-acid sequence, 343 residues long: tRNA-splicing endonuclease (343 aa).

Catalysis depends on residues tyrosine 277, histidine 288, and lysine 319.

The protein belongs to the tRNA-intron endonuclease family. Archaeal long subfamily. Homodimer.

It carries out the reaction pretRNA = a 3'-half-tRNA molecule with a 5'-OH end + a 5'-half-tRNA molecule with a 2',3'-cyclic phosphate end + an intron with a 2',3'-cyclic phosphate and a 5'-hydroxyl terminus.. Functionally, endonuclease that removes tRNA introns. Cleaves pre-tRNA at the 5' and 3' splice sites to release the intron. The products are an intron and two tRNA half-molecules bearing 2',3' cyclic phosphate and 5'-OH termini. Recognizes a pseudosymmetric substrate in which 2 bulged loops of 3 bases are separated by a stem of 4 bp. The sequence is that of tRNA-splicing endonuclease from Halobacterium salinarum (strain ATCC 29341 / DSM 671 / R1).